The sequence spans 266 residues: Urease accessory protein UreD (266 aa).

Belongs to the UreD family. UreD, UreF and UreG form a complex that acts as a GTP-hydrolysis-dependent molecular chaperone, activating the urease apoprotein by helping to assemble the nickel containing metallocenter of UreC. The UreE protein probably delivers the nickel.

It localises to the cytoplasm. In terms of biological role, required for maturation of urease via the functional incorporation of the urease nickel metallocenter. This Jannaschia sp. (strain CCS1) protein is Urease accessory protein UreD.